Here is a 643-residue protein sequence, read N- to C-terminus: 1-deoxy-D-xylulose-5-phosphate synthase (643 aa).

Thiamine diphosphate contacts are provided by residues H78 and 119 to 121; that span reads AHS. D150 provides a ligand contact to Mg(2+). Thiamine diphosphate-binding positions include 151 to 152, N179, Y288, and E370; that span reads GA. Mg(2+) is bound at residue N179.

This sequence belongs to the transketolase family. DXPS subfamily. As to quaternary structure, homodimer. Mg(2+) is required as a cofactor. It depends on thiamine diphosphate as a cofactor.

The enzyme catalyses D-glyceraldehyde 3-phosphate + pyruvate + H(+) = 1-deoxy-D-xylulose 5-phosphate + CO2. It participates in metabolic intermediate biosynthesis; 1-deoxy-D-xylulose 5-phosphate biosynthesis; 1-deoxy-D-xylulose 5-phosphate from D-glyceraldehyde 3-phosphate and pyruvate: step 1/1. Catalyzes the acyloin condensation reaction between C atoms 2 and 3 of pyruvate and glyceraldehyde 3-phosphate to yield 1-deoxy-D-xylulose-5-phosphate (DXP). This is 1-deoxy-D-xylulose-5-phosphate synthase from Xanthobacter autotrophicus (strain ATCC BAA-1158 / Py2).